A 59-amino-acid chain; its full sequence is MEIVLEAKERTDKKRSTLRRIRSQGGIPAILYGKKVENKMIFVTAAELEKVLREGGRTS.

This sequence belongs to the bacterial ribosomal protein bL25 family.

The protein is Large ribosomal subunit protein bL25 (ctc) of Bacillus caldolyticus.